We begin with the raw amino-acid sequence, 100 residues long: Tetrahydromethanopterin S-methyltransferase subunit B (100 aa).

A helical membrane pass occupies residues 80–100 (KLTNIVYGFILGLIILFALLL).

The protein belongs to the MtrB family. As to quaternary structure, the complex is composed of 8 subunits; MtrA, MtrB, MtrC, MtrD, MtrE, MtrF, MtrG and MtrH.

Its subcellular location is the cell membrane. It carries out the reaction 5-methyl-5,6,7,8-tetrahydromethanopterin + coenzyme M + 2 Na(+)(in) = 5,6,7,8-tetrahydromethanopterin + methyl-coenzyme M + 2 Na(+)(out). It functions in the pathway one-carbon metabolism; methanogenesis from CO(2); methyl-coenzyme M from 5,10-methylene-5,6,7,8-tetrahydromethanopterin: step 2/2. In terms of biological role, part of a complex that catalyzes the formation of methyl-coenzyme M and tetrahydromethanopterin from coenzyme M and methyl-tetrahydromethanopterin. This is an energy-conserving, sodium-ion translocating step. This chain is Tetrahydromethanopterin S-methyltransferase subunit B, found in Methanothermobacter marburgensis (strain ATCC BAA-927 / DSM 2133 / JCM 14651 / NBRC 100331 / OCM 82 / Marburg) (Methanobacterium thermoautotrophicum).